We begin with the raw amino-acid sequence, 776 residues long: Serine/threonine-protein kinase SIK1 (776 aa).

One can recognise a Protein kinase domain in the interval 27–278 (YDVERTLGKG…IAQIRQHRWM (252 aa)). ATP is bound by residues 33-41 (LGKGNFAVV) and Lys-56. Asp-149 serves as the catalytic Proton acceptor. Position 182 is a phosphothreonine; by LKB1 and GSK3-beta (Thr-182). Phosphoserine; by autocatalysis is present on Ser-186. Residues 303–343 (DYNEQVLGIMQALGIDRQRTVESLQNSSYNHFAAIYYLLLE) form the UBA domain. Thr-322 is subject to Phosphothreonine; by CaMK1. Disordered stretches follow at residues 350-371 (STQPSSRATPAPARQPQLRNSD) and 449-472 (EARQGPSLEEEQEVQEPLPGSTGR). At Ser-577 the chain carries Phosphoserine; by PKA. Positions 586–612 (KAFRQQLRKNARTKGFLGLNKIKGLAR) are RK-rich region. The disordered stretch occupies residues 621-643 (GSRGGMSTFHTPAPSSGLQGCTA). The span at 628–643 (TFHTPAPSSGLQGCTA) shows a compositional bias: polar residues.

Belongs to the protein kinase superfamily. CAMK Ser/Thr protein kinase family. AMPK subfamily. Interacts (when phosphorylated on Thr-182 and Ser-186) with YWHAZ. Interacts with ATP1A1. The cofactor is Mg(2+). In terms of processing, phosphorylated at Thr-182 by STK11/LKB1 in complex with STE20-related adapter-alpha (STRADA) pseudo kinase and CAB39, leading to its activation. Phosphorylation at Thr-182 promotes autophosphorylation at Ser-186, which is required for sustained activity. Autophosphorylation at Ser-186 is maintained by sequential phosphorylation at Thr-182 by GSK3-beta. GSK3-beta cannot initiate phosphorylation at Thr-182, it can only maintain it. Phosphorylation at Ser-577 by PKA promotes translocation to the cytoplasm. Phosphorylation at Thr-322 by CaMK1 following intracellular sodium concentration leads to activation.

It is found in the cytoplasm. It localises to the nucleus. It catalyses the reaction L-seryl-[protein] + ATP = O-phospho-L-seryl-[protein] + ADP + H(+). It carries out the reaction L-threonyl-[protein] + ATP = O-phospho-L-threonyl-[protein] + ADP + H(+). With respect to regulation, activated by phosphorylation on Thr-182. Also activated by phosphorylation on Thr-322 in response to increases in intracellular sodium in parallel with elevations in intracellular calcium through the reversible sodium/calcium exchanger. Serine/threonine-protein kinase involved in various processes such as cell cycle regulation, gluconeogenesis and lipogenesis regulation, muscle growth and differentiation and tumor suppression. Phosphorylates HDAC4, HDAC5, PPME1, SREBF1, CRTC1/TORC1 and CRTC2/TORC2. Acts as a tumor suppressor and plays a key role in p53/TP53-dependent anoikis, a type of apoptosis triggered by cell detachment: required for phosphorylation of p53/TP53 in response to loss of adhesion and is able to suppress metastasis. Part of a sodium-sensing signaling network, probably by mediating phosphorylation of PPME1: following increases in intracellular sodium, SIK1 is activated by CaMK1 and phosphorylates PPME1 subunit of protein phosphatase 2A (PP2A), leading to dephosphorylation of sodium/potassium-transporting ATPase ATP1A1 and subsequent increase activity of ATP1A1. Acts as a regulator of muscle cells by phosphorylating and inhibiting class II histone deacetylases HDAC4 and HDAC5, leading to promote expression of MEF2 target genes in myocytes. Also required during cardiomyogenesis by regulating the exit of cardiomyoblasts from the cell cycle via down-regulation of CDKN1C/p57Kip2. Acts as a regulator of hepatic gluconeogenesis by phosphorylating and repressing the CREB-specific coactivators CRTC1/TORC1 and CRTC2/TORC2, leading to inhibit CREB activity. Also regulates hepatic lipogenesis by phosphorylating and inhibiting SREBF1. In concert with CRTC1/TORC1, regulates the light-induced entrainment of the circadian clock by attenuating PER1 induction; represses CREB-mediated transcription of PER1 by phosphorylating and deactivating CRTC1/TORC1. The polypeptide is Serine/threonine-protein kinase SIK1 (Sik1) (Rattus norvegicus (Rat)).